The sequence spans 348 residues: Eukaryotic translation initiation factor 3 subunit H (348 aa).

The interval 1 to 25 (MASRKEGSGAAGGGFGASKGKGKAA) is disordered. Residues 9-19 (GAAGGGFGASK) are compositionally biased toward gly residues. The region spanning 35–169 (VQIDGLVVLK…LKAYRLTPKL (135 aa)) is the MPN domain. Residues 266 to 285 (QQQQKHQYQQRRQQENLQRQ) show a composition bias toward low complexity. The segment at 266-304 (QQQQKHQYQQRRQQENLQRQSRGEAPLPEEDINKLFKPP) is disordered.

The protein belongs to the eIF-3 subunit H family. In terms of assembly, component of the eukaryotic translation initiation factor 3 (eIF-3) complex, which is composed of 13 subunits: EIF3A, EIF3B, EIF3C, EIF3D, EIF3E, EIF3F, EIF3G, EIF3H, EIF3I, EIF3J, EIF3K, EIF3L and EIF3M.

The protein resides in the cytoplasm. In terms of biological role, component of the eukaryotic translation initiation factor 3 (eIF-3) complex, which is involved in protein synthesis of a specialized repertoire of mRNAs and, together with other initiation factors, stimulates binding of mRNA and methionyl-tRNAi to the 40S ribosome. The eIF-3 complex specifically targets and initiates translation of a subset of mRNAs involved in cell proliferation. The protein is Eukaryotic translation initiation factor 3 subunit H of Gallus gallus (Chicken).